The sequence spans 87 residues: HssA/B-like protein 7 (87 aa).

A compositionally biased stretch (polar residues) spans 1-22; the sequence is MSILSALTSISNPMKSTKSSVA. The tract at residues 1–23 is disordered; it reads MSILSALTSISNPMKSTKSSVAN.

This sequence belongs to the hssA/B family.

This Dictyostelium discoideum (Social amoeba) protein is HssA/B-like protein 7 (hssl7).